The primary structure comprises 318 residues: MKPLNIIFAGTPDFAARHLQALLNSHHNVIGVYTQPDRPAGRGKKLTASPVKELAVANNIPVYQPGSLRKEPAQQELAALNADIMVVVAYGLILPKVVLDTPRLGCINVHGSILPRWRGAAPIQRALWAGDKETGVTVMQMDVGLDTGDMLLKTYLPIEDSDTSASLYEKLAEQGPVALLQALEGLANGTLAAEKQDEALANYAEKLSKEEARLDWNKSAKQLWQEVRAFNPWPVSYFEHQGNTIKVWQTQVSETTSTAAPGTIISASKKGIEVATADGVLTLLSMQLPGKKPLNVADILNARGEWFSPNTRLANEAQ.

112–115 (SILP) is a binding site for (6S)-5,6,7,8-tetrahydrofolate.

Belongs to the Fmt family.

It carries out the reaction L-methionyl-tRNA(fMet) + (6R)-10-formyltetrahydrofolate = N-formyl-L-methionyl-tRNA(fMet) + (6S)-5,6,7,8-tetrahydrofolate + H(+). Its function is as follows. Attaches a formyl group to the free amino group of methionyl-tRNA(fMet). The formyl group appears to play a dual role in the initiator identity of N-formylmethionyl-tRNA by promoting its recognition by IF2 and preventing the misappropriation of this tRNA by the elongation apparatus. The sequence is that of Methionyl-tRNA formyltransferase from Shewanella baltica (strain OS223).